We begin with the raw amino-acid sequence, 509 residues long: 2-isopropylmalate synthase (509 aa).

Positions 5-267 (IQIFDTTLRD…QTALNLEETK (263 aa)) constitute a Pyruvate carboxyltransferase domain. Mn(2+) contacts are provided by Asp-14, His-202, His-204, and Asn-238. Residues 391–509 (KLETLQLQYV…AAENVEKVGN (119 aa)) form a regulatory domain region.

This sequence belongs to the alpha-IPM synthase/homocitrate synthase family. LeuA type 1 subfamily. In terms of assembly, homodimer. Requires Mn(2+) as cofactor.

The protein resides in the cytoplasm. It catalyses the reaction 3-methyl-2-oxobutanoate + acetyl-CoA + H2O = (2S)-2-isopropylmalate + CoA + H(+). Its pathway is amino-acid biosynthesis; L-leucine biosynthesis; L-leucine from 3-methyl-2-oxobutanoate: step 1/4. Its function is as follows. Catalyzes the condensation of the acetyl group of acetyl-CoA with 3-methyl-2-oxobutanoate (2-ketoisovalerate) to form 3-carboxy-3-hydroxy-4-methylpentanoate (2-isopropylmalate). This is 2-isopropylmalate synthase from Staphylococcus aureus (strain bovine RF122 / ET3-1).